Reading from the N-terminus, the 443-residue chain is Phosphoglucosamine mutase (443 aa).

The active-site Phosphoserine intermediate is S100. Mg(2+)-binding residues include S100, D240, D242, and D244. Phosphoserine is present on S100.

Belongs to the phosphohexose mutase family. The cofactor is Mg(2+). Post-translationally, activated by phosphorylation.

The catalysed reaction is alpha-D-glucosamine 1-phosphate = D-glucosamine 6-phosphate. Catalyzes the conversion of glucosamine-6-phosphate to glucosamine-1-phosphate. This Carboxydothermus hydrogenoformans (strain ATCC BAA-161 / DSM 6008 / Z-2901) protein is Phosphoglucosamine mutase.